Consider the following 36-residue polypeptide: Photosystem II reaction center protein M (36 aa).

A helical transmembrane segment spans residues 5–25; that stretch reads ILGVIAVALFILIPTSFLLIL.

The protein belongs to the PsbM family. In terms of assembly, PSII is composed of 1 copy each of membrane proteins PsbA, PsbB, PsbC, PsbD, PsbE, PsbF, PsbH, PsbI, PsbJ, PsbK, PsbL, PsbM, PsbT, PsbY, PsbZ, Psb30/Ycf12, at least 3 peripheral proteins of the oxygen-evolving complex and a large number of cofactors. It forms dimeric complexes.

It is found in the plastid. The protein resides in the chloroplast thylakoid membrane. In terms of biological role, one of the components of the core complex of photosystem II (PSII). PSII is a light-driven water:plastoquinone oxidoreductase that uses light energy to abstract electrons from H(2)O, generating O(2) and a proton gradient subsequently used for ATP formation. It consists of a core antenna complex that captures photons, and an electron transfer chain that converts photonic excitation into a charge separation. This subunit is found at the monomer-monomer interface. This Bigelowiella natans (Pedinomonas minutissima) protein is Photosystem II reaction center protein M.